Reading from the N-terminus, the 357-residue chain is Arginine kinase (357 aa).

A2 carries the post-translational modification N-acetylalanine. The Phosphagen kinase N-terminal domain maps to 9–91; the sequence is KLEEGFKKLE…FDPIIEDYHK (83 aa). Position 64–68 (64–68) interacts with L-arginine; sequence GVGVY. A Phosphagen kinase C-terminal domain is found at 119–356; it reads FVISTRVRCG…LELIKIEKEM (238 aa). ATP is bound by residues 122–126 and H185; that span reads STRVR. E225 contributes to the L-arginine binding site. Residue R229 coordinates ATP. C271 serves as a coordination point for L-arginine. Residues 280–284 and 309–314 contribute to the ATP site; these read RASVH and RGTRGE. E314 is an L-arginine binding site.

Belongs to the ATP:guanido phosphotransferase family.

It carries out the reaction L-arginine + ATP = N(omega)-phospho-L-arginine + ADP + H(+). The polypeptide is Arginine kinase (Carcinus maenas (Common shore crab)).